We begin with the raw amino-acid sequence, 619 residues long: Chitinase C (619 aa).

Residues 1-30 (MRFRHKAAALAATLALPLAGLVGLASPAQA) form the signal peptide. The CBM2 domain occupies 31–134 (ATSATATFAK…KLNGGSCDGT (104 aa)). The 86-residue stretch at 144-229 (APGTPTASNI…GAVKVTTTGG (86 aa)) folds into the Fibronectin type-III domain. The segment at 212–236 (ADQTGPASGAVKVTTTGGGDGGNPG) is disordered. The segment covering 227–236 (TGGGDGGNPG) has biased composition (gly residues). The GH18 domain maps to 240 to 619 (EVKMGYFTNW…TPAVRTTRRH (380 aa)). Residues 312-313 (DQ) and 339-342 (GGWT) contribute to the chitin site. E382 acts as the Proton donor in catalysis. Residues Y383, 449–452 (MTYD), and W589 each bind chitin.

This sequence belongs to the glycosyl hydrolase 18 family. Chitinase class II subfamily.

The enzyme catalyses Random endo-hydrolysis of N-acetyl-beta-D-glucosaminide (1-&gt;4)-beta-linkages in chitin and chitodextrins.. The sequence is that of Chitinase C (chiC) from Streptomyces lividans.